The following is a 309-amino-acid chain: Putative taste receptor type 2 member 33 (309 aa).

A topological domain (extracellular) is located at residue methionine 1. Residues 2–22 traverse the membrane as a helical segment; sequence VYFLPIIFSILVVFAFVLGNF. The Cytoplasmic portion of the chain corresponds to 23 to 46; that stretch reads SNGFIALVNVIDWVKRQKISSADQ. A helical transmembrane segment spans residues 47 to 67; it reads ILTALVVSRVGLLWVILLHWY. At 68–86 the chain is on the extracellular side; it reads ANVFNSALYSLEVRIVASN. N-linked (GlcNAc...) asparagine glycosylation occurs at asparagine 86. The helical transmembrane segment at 87–107 threads the bilayer; it reads ISAVINHFSIWLAASLSIFYL. At 108–127 the chain is on the cytoplasmic side; that stretch reads LKIANFSNLIFLHLKKRIKS. Residues 128–148 traverse the membrane as a helical segment; it reads VVLVILLGPLVFLICNLAVIT. At 149–181 the chain is on the extracellular side; that stretch reads MDERVWTKEYEGNVTWKIKLRNAIHLSSLTVTT. N-linked (GlcNAc...) asparagine glycosylation occurs at asparagine 161. The helical transmembrane segment at 182–202 threads the bilayer; sequence LANLIPFTLSLICFLLLICSL. Residues 203–229 lie on the Cytoplasmic side of the membrane; that stretch reads CKHLKKMQLHSKGSQDPSTKVHIKALQ. Residues 230–250 form a helical membrane-spanning segment; the sequence is TVISFLMLCAIYFLSIMISVW. Residues 251–259 are Extracellular-facing; the sequence is NLRSLENKP. Residues 260–280 form a helical membrane-spanning segment; it reads VFMFCKAIRFSYPSIHPFILI. Residues 281 to 309 are Cytoplasmic-facing; the sequence is WGNKKLKQTFLSVFWQVRYWVKGEKPSSP.

This sequence belongs to the G-protein coupled receptor T2R family.

It localises to the membrane. Functionally, putative taste receptor which may play a role in the perception of bitterness. The protein is Putative taste receptor type 2 member 33 of Homo sapiens (Human).